A 202-amino-acid polypeptide reads, in one-letter code: Small ribosomal subunit protein uS4 (202 aa).

Positions 23–42 (RKNARRAYAPGQHGQARKKR) are disordered. Positions 90 to 153 (MRLDNTVFRL…RSQDLVKRNM (64 aa)) constitute an S4 RNA-binding domain.

Belongs to the universal ribosomal protein uS4 family. In terms of assembly, part of the 30S ribosomal subunit. Contacts protein S5. The interaction surface between S4 and S5 is involved in control of translational fidelity.

Functionally, one of the primary rRNA binding proteins, it binds directly to 16S rRNA where it nucleates assembly of the body of the 30S subunit. In terms of biological role, with S5 and S12 plays an important role in translational accuracy. This Microcystis aeruginosa (strain NIES-843 / IAM M-2473) protein is Small ribosomal subunit protein uS4.